The following is a 329-amino-acid chain: GTPase Obg (329 aa).

The 159-residue stretch at 1 to 159 (MQFIDQARIT…WFLQLELKLL (159 aa)) folds into the Obg domain. Residues 160 to 328 (AEVGIIGLPN…LLAQVWKELG (169 aa)) enclose the OBG-type G domain. Residues 166 to 173 (GLPNAGKS), 191 to 195 (FTTLV), 213 to 216 (DIPG), 280 to 283 (NKQE), and 309 to 311 (SAA) each bind ATP. Residues Ser-173 and Thr-193 each coordinate Mg(2+).

This sequence belongs to the TRAFAC class OBG-HflX-like GTPase superfamily. OBG GTPase family. Monomer. Mg(2+) is required as a cofactor.

It is found in the cytoplasm. Functionally, an essential GTPase which binds GTP, GDP and possibly (p)ppGpp with moderate affinity, with high nucleotide exchange rates and a fairly low GTP hydrolysis rate. Plays a role in control of the cell cycle, stress response, ribosome biogenesis and in those bacteria that undergo differentiation, in morphogenesis control. The chain is GTPase Obg from Prochlorococcus marinus (strain MIT 9313).